A 61-amino-acid chain; its full sequence is Small ribosomal subunit protein uS14 (61 aa).

Zn(2+)-binding residues include cysteine 24, cysteine 27, cysteine 40, and cysteine 43.

This sequence belongs to the universal ribosomal protein uS14 family. Zinc-binding uS14 subfamily. As to quaternary structure, part of the 30S ribosomal subunit. Contacts proteins S3 and S10. Requires Zn(2+) as cofactor.

Binds 16S rRNA, required for the assembly of 30S particles and may also be responsible for determining the conformation of the 16S rRNA at the A site. The protein is Small ribosomal subunit protein uS14 of Nitratiruptor sp. (strain SB155-2).